Reading from the N-terminus, the 387-residue chain is Exodeoxyribonuclease 7 large subunit (387 aa).

Belongs to the XseA family. As to quaternary structure, heterooligomer composed of large and small subunits.

Its subcellular location is the cytoplasm. It carries out the reaction Exonucleolytic cleavage in either 5'- to 3'- or 3'- to 5'-direction to yield nucleoside 5'-phosphates.. Its function is as follows. Bidirectionally degrades single-stranded DNA into large acid-insoluble oligonucleotides, which are then degraded further into small acid-soluble oligonucleotides. The protein is Exodeoxyribonuclease 7 large subunit of Synechococcus sp. (strain CC9605).